The sequence spans 126 residues: MLSRLIQHITSIFVFSFFFLFFFFSLKRCPRDVKREGNEIFTGNVTTITQVYLESTNVSAYLGCQCNNIETIICLQNSGNTTISAYHVHISEIGSVALQTEGALLVFSPIFCFLVKFVYRQRIALV.

Residues 5 to 25 (LIQHITSIFVFSFFFLFFFFS) form a helical membrane-spanning segment.

Its subcellular location is the membrane. This is an uncharacterized protein from Saccharomyces cerevisiae (strain ATCC 204508 / S288c) (Baker's yeast).